The sequence spans 197 residues: A-type ATP synthase subunit E (197 aa).

The protein belongs to the V-ATPase E subunit family. Has multiple subunits with at least A(3), B(3), C, D, E, F, H, I and proteolipid K(x).

It localises to the cell membrane. Component of the A-type ATP synthase that produces ATP from ADP in the presence of a proton gradient across the membrane. The polypeptide is A-type ATP synthase subunit E (Thermococcus gammatolerans (strain DSM 15229 / JCM 11827 / EJ3)).